A 1012-amino-acid polypeptide reads, in one-letter code: Roundabout homolog 4 (1012 aa).

A signal peptide spans 1-27; sequence MGSGGTGLLGTEWPLPLLLLFIMGGEA. Ig-like C2-type domains lie at 32-132 and 138-225; these read PQIL…ARLS and EDFQ…ARVS. 2 disulfide bridges follow: cysteine 53–cysteine 115 and cysteine 159–cysteine 208. Residues asparagine 201 and asparagine 247 are each glycosylated (N-linked (GlcNAc...) asparagine). 2 Fibronectin type-III domains span residues 249-346 and 348-443; these read TLLN…LPEQ and PSAP…LEQA. Residues asparagine 361, asparagine 390, and asparagine 397 are each glycosylated (N-linked (GlcNAc...) asparagine). Disordered regions lie at residues 533 to 553 and 586 to 616; these read TSGS…GLDP and LIAE…AGTS. The segment covering 534 to 550 has biased composition (low complexity); that stretch reads SGSRDLSSSSSLSSRLG. The segment covering 592-601 has biased composition (pro residues); the sequence is SSPPVRPSPK. Residues asparagine 681 and asparagine 713 are each glycosylated (N-linked (GlcNAc...) asparagine). The interval 711–801 is disordered; the sequence is HRNSSELASR…LEEEEDQDSV (91 aa). Over residues 745 to 759 the composition is skewed to low complexity; the sequence is LQAPSSDPLPAAPLS. The segment covering 760–771 has biased composition (polar residues); sequence VLNSSRPSSPQA. Residues asparagine 762 and asparagine 783 are each glycosylated (N-linked (GlcNAc...) asparagine). Over residues 772–791 the composition is skewed to low complexity; the sequence is SFLSCPSPSSSNLSSSSLSS. 2 positions are modified to phosphoserine: serine 814 and serine 947. The segment at 980-1012 is disordered; sequence RLGRGLPPWPPDSRASSQRSWLTGAVPKAGDSS.

Belongs to the immunoglobulin superfamily. ROBO family. As to quaternary structure, interacts with SLIT2 and ENAH. As to expression, expressed specifically in embryo and adult vascular endothelium.

Receptor for Slit proteins, at least for SLIT2, and seems to be involved in angiogenesis and vascular patterning. May mediate the inhibition of primary endothelial cell migration by Slit proteins. Involved in the maintenance of endothelial barrier organization and function. The sequence is that of Roundabout homolog 4 (Robo4) from Mus musculus (Mouse).